The chain runs to 175 residues: Large ribosomal subunit protein uL10 (175 aa).

It belongs to the universal ribosomal protein uL10 family. In terms of assembly, part of the ribosomal stalk of the 50S ribosomal subunit. The N-terminus interacts with L11 and the large rRNA to form the base of the stalk. The C-terminus forms an elongated spine to which L12 dimers bind in a sequential fashion forming a multimeric L10(L12)X complex.

Functionally, forms part of the ribosomal stalk, playing a central role in the interaction of the ribosome with GTP-bound translation factors. The sequence is that of Large ribosomal subunit protein uL10 from Prochlorococcus marinus (strain NATL2A).